The sequence spans 541 residues: Lipase-like PAD4 (541 aa).

Ser118 serves as the catalytic Nucleophile. Active-site charge relay system residues include Asp178 and His229.

Belongs to the AB hydrolase superfamily. Lipase family. As to quaternary structure, part of a nuclear complex made of EDS1, SG101 and PAD4 that can be redirected to the cytoplasm in the presence of an extranuclear form of EDS1. Sabilized by direct interaction with EDS1 in infected leaves. Part of a nuclear protein complex made of VICTR, PAD4 and EDS1. Interacts with VICTR. Interacts with EDS1.

The protein localises to the nucleus. It is found in the cytoplasm. Functionally, probable lipase required downstream of MPK4 for accumulation of the plant defense-potentiating molecule, salicylic acid, thus contributing to the plant innate immunity against invasive biotrophic pathogens and to defense mechanisms upon recognition of microbe-associated molecular patterns (MAMPs). Participates in the regulation of various molecular and physiological processes that influence fitness. Together with SG101, required for programmed cell death (PCD) triggered by NBS-LRR resistance proteins (e.g. RPS4, RPW8.1 and RPW8.2) in response to the fungal toxin fumonisin B1 (FB1) and avirulent pathogens (e.g. P.syringae pv. tomato strain DC3000 avrRps4 and pv. maculicola, turnip crinkle virus (TCV), and H.arabidopsidis isolates CALA2, EMOY2, EMWA1 and HIND4). Together with EDS1, confers a basal resistance by restricting the growth of virulent pathogens (e.g. H.arabidopsidis isolates NOCO2 and EMCO5, E.orontii isolate MGH, and P.syringae pv. tomato strain DC3000 or expressing HopW1-1 (HopPmaA)). Necessary for the salicylic acid-(SA-) dependent systemic acquired resistance (SAR) response that involves expression of multiple defense responses, including synthesis of the phytoalexin camalexin and expression of pathogenesis-related genes (e.g. PR1, ALD1, BGL2 and PR5) in response to pathogens, triggering a signal amplification loop that increases SA levels via EDS5 and SID2, but, together with EDS1, seems to repress the ethylene/jasmonic acid (ET/JA) defense pathway. May also function in response to abiotic stresses such as UV-C light and LSD1-dependent acclimatization to light conditions that promote excess excitation energy (EEE), probably by transducing redox signals and modulating stomatal conductance. Regulates the formation of lysigenous aerenchyma in hypocotyls in response to hypoxia, maybe via hydrogen peroxide production. Modulates leaf senescence in insect-infested tissue and triggers a phloem-based defense mechanism including antibiosis (e.g. green peach aphid (GPA), M.persicae) to limit phloem sap uptake and insect growth, thus providing an EDS1-independent basal resistance to insects. Also involved in regulation of root meristematic zone-targeted growth arrest together with EDS1 and in a VICTR-dependent manner. The chain is Lipase-like PAD4 (PAD4) from Arabidopsis thaliana (Mouse-ear cress).